The primary structure comprises 150 residues: Large ribosomal subunit protein uL11 (150 aa).

A disordered region spans residues 83–111 (AAGLKPQGKRNRAKGSEKPGRQTAGTVTA).

The protein belongs to the universal ribosomal protein uL11 family. In terms of assembly, part of the ribosomal stalk of the 50S ribosomal subunit. Interacts with L10 and the large rRNA to form the base of the stalk. L10 forms an elongated spine to which L12 dimers bind in a sequential fashion forming a multimeric L10(L12)X complex. In terms of processing, one or more lysine residues are methylated.

Forms part of the ribosomal stalk which helps the ribosome interact with GTP-bound translation factors. This is Large ribosomal subunit protein uL11 from Paracoccus denitrificans (strain Pd 1222).